Here is a 200-residue protein sequence, read N- to C-terminus: Holliday junction resolvase RecU (200 aa).

The tract at residues 1-25 (MTIRYPNGKRYNQASQPHKTPIKKH) is disordered. 4 residues coordinate Mg(2+): Thr85, Asp87, Glu100, and Gln119.

The protein belongs to the RecU family. The cofactor is Mg(2+).

Its subcellular location is the cytoplasm. The enzyme catalyses Endonucleolytic cleavage at a junction such as a reciprocal single-stranded crossover between two homologous DNA duplexes (Holliday junction).. Endonuclease that resolves Holliday junction intermediates in genetic recombination. Cleaves mobile four-strand junctions by introducing symmetrical nicks in paired strands. Promotes annealing of linear ssDNA with homologous dsDNA. Required for DNA repair, homologous recombination and chromosome segregation. This Bacillus cereus (strain ZK / E33L) protein is Holliday junction resolvase RecU.